The primary structure comprises 123 residues: Small ribosomal subunit protein uS12 (123 aa).

A disordered region spans residues 1–29 (MPTINQLIRKKRQSSASRKKSPALQKCPQ). Residues 8 to 21 (IRKKRQSSASRKKS) show a composition bias toward basic residues. Asp89 is subject to 3-methylthioaspartic acid.

It belongs to the universal ribosomal protein uS12 family. In terms of assembly, part of the 30S ribosomal subunit. Contacts proteins S8 and S17. May interact with IF1 in the 30S initiation complex.

With S4 and S5 plays an important role in translational accuracy. Its function is as follows. Interacts with and stabilizes bases of the 16S rRNA that are involved in tRNA selection in the A site and with the mRNA backbone. Located at the interface of the 30S and 50S subunits, it traverses the body of the 30S subunit contacting proteins on the other side and probably holding the rRNA structure together. The combined cluster of proteins S8, S12 and S17 appears to hold together the shoulder and platform of the 30S subunit. This is Small ribosomal subunit protein uS12 from Chlamydia abortus (strain DSM 27085 / S26/3) (Chlamydophila abortus).